Here is an 802-residue protein sequence, read N- to C-terminus: Outer membrane usher protein CssD (802 aa).

This sequence belongs to the fimbrial export usher family.

The protein localises to the cell outer membrane. Functionally, involved in the export and assembly of C6 fimbrial subunits across the outer membrane. The polypeptide is Outer membrane usher protein CssD (cssD) (Escherichia coli).